Here is a 603-residue protein sequence, read N- to C-terminus: Serine/threonine-protein kinase PLK1 (603 aa).

The segment at 1–35 (MSAAVTAGKLARAPADPGKAGVPGVAAPGAPAAAP) is disordered. Residue Ser2 is modified to N-acetylserine. Thr6 carries the post-translational modification Phosphothreonine. Over residues 13–35 (APADPGKAGVPGVAAPGAPAAAP) the composition is skewed to low complexity. Residue Lys19 forms a Glycyl lysine isopeptide (Lys-Gly) (interchain with G-Cter in ubiquitin) linkage. The region spanning 53 to 305 (YVRGRFLGKG…INELLNDEFF (253 aa)) is the Protein kinase domain. ATP-binding positions include 59–67 (LGKGGFAKC) and Lys82. Position 103 is a phosphoserine (Ser103). Glu131 contacts ATP. A Phosphoserine modification is found at Ser137. The active-site Proton acceptor is the Asp176. ATP-binding positions include 178–181 (KLGN) and Asp194. Residues 194–221 (DFGLATKVEYDGERKKTLCGTPNYIAPE) are activation loop. Position 210 is a phosphothreonine; by AURKA (Thr210). Residue Thr214 is modified to Phosphothreonine. Ser269 is modified (phosphoserine; by autocatalysis). A Phosphoserine modification is found at Ser335. Residues 337 to 340 (RKPL) carry the D-box that targets the protein for proteasomal degradation in anaphase motif. A Glycyl lysine isopeptide (Lys-Gly) (interchain with G-Cter in SUMO2) cross-link involves residue Lys338. Residues 338–364 (KPLTVLNKGLENPLPERPREKEEPVVR) are disordered. Positions 351–364 (LPERPREKEEPVVR) are enriched in basic and acidic residues. Residues Ser375 and Ser450 each carry the phosphoserine modification. The POLO box 1 domain occupies 410-488 (WVSKWVDYSD…LKYFRNYMSE (79 aa)). Residue Lys492 forms a Glycyl lysine isopeptide (Lys-Gly) (interchain with G-Cter in ubiquitin) linkage. The linker stretch occupies residues 493-507 (AGANITPREGDELAR). Thr498 bears the Phosphothreonine mark. One can recognise a POLO box 2 domain in the interval 510-592 (YLRTWFRTRS…ARTMVDKLLS (83 aa)). The segment at 538-540 (HTK) is important for interaction with phosphorylated proteins.

This sequence belongs to the protein kinase superfamily. Ser/Thr protein kinase family. CDC5/Polo subfamily. As to quaternary structure, interacts with CEP170. Interacts with EVI5. Interacts with FAM29A. Interacts with SLX4/BTBD12. Interacts with TTDN1. Interacts (via POLO-box domain) with the phosphorylated form of BUB1, CDC25C and CENPU. Interacts with KIF2A. Interacts with CYLD. Part of an astrin (SPAG5)-kinastrin (SKAP) complex containing KNSTRN, SPAG5, PLK1, DYNLL1 and SGO2. Interacts with BIRC6/bruce. Interacts with CDK1-phosphorylated FRY; this interaction occurs in mitotic cells, but not in interphase cells. FRY interaction facilitates AURKA-mediated PLK1 phosphorylation. Interacts with CDK1-phosphorylated DCTN6 during mitotic prometaphase; the interaction facilitates recruitment to kinetochores. Interacts with CEP68; the interaction phosphorylates CEP68. Interacts (via POLO-box domain) with DCTN1. Interacts with CEP20 in later G1, S, G2 and M phases of the cell cycle; this interaction recruits PLK1 to centrosomes, a step required for S phase progression. Interacts with KLHL22. Interacts (via POLO box domains) with NEDD9/HEF1 (via C-terminus). Interacts with FIRRM (via N-terminus region); required for maintaining, but not activating, PLK1 kinase activity. Interacts with FZR1. Interacts with SKA3; the interaction promotes the stability of PLK1; the interaction promotes the stability of PLK1. Interacts with the MTMR3:MTMR4 heterooligomer; brings CEP55 and PLK1 together during early mitosis, regulating the phosphorylation of CEP55 by PLK1 and its recruitment to the midbody where it can mediate cell abscission. Catalytic activity is enhanced by phosphorylation of Thr-210. Phosphorylation at Thr-210 is first detected on centrosomes in the G2 phase of the cell cycle, peaks in prometaphase and gradually disappears from centrosomes during anaphase. Dephosphorylation at Thr-210 at centrosomes is probably mediated by protein phosphatase 1C (PP1C), via interaction with PPP1R12A/MYPT1. Autophosphorylation and phosphorylation of Ser-137 may not be significant for the activation of PLK1 during mitosis, but may enhance catalytic activity during recovery after DNA damage checkpoint. Phosphorylated in vitro by STK10. Post-translationally, ubiquitinated by the anaphase promoting complex/cyclosome (APC/C) in anaphase and following DNA damage, leading to its degradation by the proteasome. Ubiquitination is mediated via its interaction with FZR1/CDH1. Ubiquitination and subsequent degradation prevents entry into mitosis and is essential to maintain an efficient G2 DNA damage checkpoint. Monoubiquitination at Lys-492 by the BCR(KLHL22) ubiquitin ligase complex does not lead to degradation: it promotes PLK1 dissociation from phosphoreceptor proteins and subsequent removal from kinetochores, allowing silencing of the spindle assembly checkpoint (SAC) and chromosome segregation. Placenta and colon.

It localises to the nucleus. The protein resides in the chromosome. Its subcellular location is the centromere. The protein localises to the kinetochore. It is found in the cytoplasm. It localises to the cytoskeleton. The protein resides in the microtubule organizing center. Its subcellular location is the centrosome. The protein localises to the spindle. It is found in the midbody. It catalyses the reaction L-seryl-[protein] + ATP = O-phospho-L-seryl-[protein] + ADP + H(+). The catalysed reaction is L-threonyl-[protein] + ATP = O-phospho-L-threonyl-[protein] + ADP + H(+). Activated by phosphorylation of Thr-210 by AURKA; phosphorylation by AURKA is enhanced by BORA. Once activated, activity is stimulated by binding target proteins. Binding of target proteins has no effect on the non-activated kinase. Several inhibitors targeting PLKs are currently in development and are under investigation in a growing number of clinical trials, such as BI 2536, an ATP-competitive PLK1 inhibitor or BI 6727, a dihydropteridinone that specifically inhibits the catalytic activity of PLK1. Serine/threonine-protein kinase that performs several important functions throughout M phase of the cell cycle, including the regulation of centrosome maturation and spindle assembly, the removal of cohesins from chromosome arms, the inactivation of anaphase-promoting complex/cyclosome (APC/C) inhibitors, and the regulation of mitotic exit and cytokinesis. Polo-like kinase proteins act by binding and phosphorylating proteins that are already phosphorylated on a specific motif recognized by the POLO box domains. Phosphorylates BORA, BUB1B/BUBR1, CCNB1, CDC25C, CEP55, ECT2, ERCC6L, FBXO5/EMI1, FOXM1, KIF20A/MKLP2, CENPU, NEDD1, NINL, NPM1, NUDC, PKMYT1/MYT1, KIZ, MRE11, PPP1R12A/MYPT1, POLQ, PRC1, RACGAP1/CYK4, RAD51, RHNO1, SGO1, STAG2/SA2, TEX14, TOPORS, p73/TP73, TPT1, WEE1 and HNRNPU. Plays a key role in centrosome functions and the assembly of bipolar spindles by phosphorylating KIZ, NEDD1 and NINL. NEDD1 phosphorylation promotes subsequent targeting of the gamma-tubulin ring complex (gTuRC) to the centrosome, an important step for spindle formation. Phosphorylation of NINL component of the centrosome leads to NINL dissociation from other centrosomal proteins. Involved in mitosis exit and cytokinesis by phosphorylating CEP55, ECT2, KIF20A/MKLP2, CENPU, PRC1 and RACGAP1. Recruited at the central spindle by phosphorylating and docking PRC1 and KIF20A/MKLP2; creates its own docking sites on PRC1 and KIF20A/MKLP2 by mediating phosphorylation of sites subsequently recognized by the POLO box domains. Phosphorylates RACGAP1, thereby creating a docking site for the Rho GTP exchange factor ECT2 that is essential for the cleavage furrow formation. Promotes the central spindle recruitment of ECT2. Plays a central role in G2/M transition of mitotic cell cycle by phosphorylating CCNB1, CDC25C, FOXM1, CENPU, PKMYT1/MYT1, PPP1R12A/MYPT1 and WEE1. Part of a regulatory circuit that promotes the activation of CDK1 by phosphorylating the positive regulator CDC25C and inhibiting the negative regulators WEE1 and PKMYT1/MYT1. Also acts by mediating phosphorylation of cyclin-B1 (CCNB1) on centrosomes in prophase. Phosphorylates FOXM1, a key mitotic transcription regulator, leading to enhance FOXM1 transcriptional activity. Involved in kinetochore functions and sister chromatid cohesion by phosphorylating BUB1B/BUBR1, FBXO5/EMI1 and STAG2/SA2. PLK1 is high on non-attached kinetochores suggesting a role of PLK1 in kinetochore attachment or in spindle assembly checkpoint (SAC) regulation. Required for kinetochore localization of BUB1B. Regulates the dissociation of cohesin from chromosomes by phosphorylating cohesin subunits such as STAG2/SA2. Phosphorylates SGO1: required for spindle pole localization of isoform 3 of SGO1 and plays a role in regulating its centriole cohesion function. Mediates phosphorylation of FBXO5/EMI1, a negative regulator of the APC/C complex during prophase, leading to FBXO5/EMI1 ubiquitination and degradation by the proteasome. Acts as a negative regulator of p53 family members: phosphorylates TOPORS, leading to inhibit the sumoylation of p53/TP53 and simultaneously enhance the ubiquitination and subsequent degradation of p53/TP53. Phosphorylates the transactivation domain of the transcription factor p73/TP73, leading to inhibit p73/TP73-mediated transcriptional activation and pro-apoptotic functions. Phosphorylates BORA, and thereby promotes the degradation of BORA. Contributes to the regulation of AURKA function. Also required for recovery after DNA damage checkpoint and entry into mitosis. Phosphorylates MISP, leading to stabilization of cortical and astral microtubule attachments required for proper spindle positioning. Together with MEIKIN, acts as a regulator of kinetochore function during meiosis I: required both for mono-orientation of kinetochores on sister chromosomes and protection of centromeric cohesin from separase-mediated cleavage. Phosphorylates CEP68 and is required for its degradation. Regulates nuclear envelope breakdown during prophase by phosphorylating DCTN1 resulting in its localization in the nuclear envelope. Phosphorylates the heat shock transcription factor HSF1, promoting HSF1 nuclear translocation upon heat shock. Phosphorylates HSF1 also in the early mitotic period; this phosphorylation regulates HSF1 localization to the spindle pole, the recruitment of the SCF(BTRC) ubiquitin ligase complex induicing HSF1 degradation, and hence mitotic progression. Regulates mitotic progression by phosphorylating RIOK2. Through the phosphorylation of DZIP1 regulates the localization during mitosis of the BBSome, a ciliary protein complex involved in cilium biogenesis. Regulates DNA repair during mitosis by mediating phosphorylation of POLQ and RHNO1, thereby promoting POLQ recruitment to DNA damage sites. Phosphorylates ATXN10 which may play a role in the regulation of cytokinesis and may stimulate the proteasome-mediated degradation of ATXN10. The polypeptide is Serine/threonine-protein kinase PLK1 (PLK1) (Homo sapiens (Human)).